We begin with the raw amino-acid sequence, 337 residues long: uncharacterized protein (337 aa).

Position 29–36 (glycine 29–serine 36) interacts with ATP.

The protein belongs to the archaeal ATPase family.

This is an uncharacterized protein from Methanocaldococcus jannaschii (strain ATCC 43067 / DSM 2661 / JAL-1 / JCM 10045 / NBRC 100440) (Methanococcus jannaschii).